The following is a 546-amino-acid chain: (-)-5-epieremophilene synthase STPS2 (546 aa).

Mg(2+) contacts are provided by aspartate 299, aspartate 303, aspartate 442, threonine 446, and glutamate 450. The short motif at 299–303 (DDTYD) is the DDXXD motif element.

This sequence belongs to the terpene synthase family. Tpsa subfamily. In terms of assembly, monomer. Mg(2+) serves as cofactor. As to expression, highly expressed in leaves. Expressed at levels in flowers.

The catalysed reaction is (2E,6E)-farnesyl diphosphate = (-)-5-epi-eremophilene + diphosphate. It functions in the pathway secondary metabolite biosynthesis; terpenoid biosynthesis. In terms of biological role, sesquiterpene synthase that catalyzes the conversion of farnesyl diphosphate to (-)-5-epi-eremophilene. The protein is (-)-5-epieremophilene synthase STPS2 of Salvia miltiorrhiza (Chinese sage).